The chain runs to 120 residues: Crustacean hyperglycemic hormones 1 (120 aa).

The N-terminal stretch at 1-27 (MTAFRMVWSMLLASLLMLLVASSTAPA) is a signal peptide. Cystine bridges form between cysteine 53-cysteine 89, cysteine 69-cysteine 85, and cysteine 72-cysteine 98. The residue at position 118 (valine 118) is a Valine amide.

The protein belongs to the arthropod CHH/MIH/GIH/VIH hormone family.

Its subcellular location is the secreted. In terms of biological role, hormone found in the sinus gland of isopods and decapods which controls the blood sugar level. Has a secretagogue action over the amylase released from the midgut gland. May act as a stress hormone and may be involved in the control of molting and reproduction. The polypeptide is Crustacean hyperglycemic hormones 1 (CHH1) (Penaeus monodon (Giant tiger prawn)).